Here is a 712-residue protein sequence, read N- to C-terminus: 1,4-alpha-glucan branching enzyme GlgB (712 aa).

Aspartate 397 functions as the Nucleophile in the catalytic mechanism. The active-site Proton donor is the glutamate 450.

This sequence belongs to the glycosyl hydrolase 13 family. GlgB subfamily. In terms of assembly, monomer.

The enzyme catalyses Transfers a segment of a (1-&gt;4)-alpha-D-glucan chain to a primary hydroxy group in a similar glucan chain.. Its pathway is glycan biosynthesis; glycogen biosynthesis. Functionally, catalyzes the formation of the alpha-1,6-glucosidic linkages in glycogen by scission of a 1,4-alpha-linked oligosaccharide from growing alpha-1,4-glucan chains and the subsequent attachment of the oligosaccharide to the alpha-1,6 position. This is 1,4-alpha-glucan branching enzyme GlgB from Bradyrhizobium sp. (strain ORS 278).